Consider the following 282-residue polypeptide: Bifunctional protein FolD (282 aa).

NADP(+) is bound by residues 167–169 and Ser192; that span reads GRS.

This sequence belongs to the tetrahydrofolate dehydrogenase/cyclohydrolase family. In terms of assembly, homodimer.

It catalyses the reaction (6R)-5,10-methylene-5,6,7,8-tetrahydrofolate + NADP(+) = (6R)-5,10-methenyltetrahydrofolate + NADPH. The enzyme catalyses (6R)-5,10-methenyltetrahydrofolate + H2O = (6R)-10-formyltetrahydrofolate + H(+). Its pathway is one-carbon metabolism; tetrahydrofolate interconversion. In terms of biological role, catalyzes the oxidation of 5,10-methylenetetrahydrofolate to 5,10-methenyltetrahydrofolate and then the hydrolysis of 5,10-methenyltetrahydrofolate to 10-formyltetrahydrofolate. This chain is Bifunctional protein FolD, found in Acidobacterium capsulatum (strain ATCC 51196 / DSM 11244 / BCRC 80197 / JCM 7670 / NBRC 15755 / NCIMB 13165 / 161).